A 1435-amino-acid polypeptide reads, in one-letter code: Neuropathy target esterase sws (1435 aa).

Residues 1 to 35 (MDVLELLRVSGSNMYYSTFLADAWCYYISNQITMT) are Lumenal-facing. A helical membrane pass occupies residues 36–56 (MYLYCALGVLSMLFIGWFVYF). Over 57–1435 (KRLARLRLRH…NTNNETKNYL (1379 aa)) the chain is Cytoplasmic. 176 to 303 (IFGHFEKPIF…IRVIQVIMIR (128 aa)) lines the a nucleoside 3',5'-cyclic phosphate pocket. Residues 361–372 (AASGTAGSTHTA) are compositionally biased toward low complexity. Disordered regions lie at residues 361–405 (AASG…ELSG) and 422–452 (NSYP…QPEV). A compositionally biased stretch (polar residues) spans 435 to 449 (GNLSTRRGSITQQEQ). The residue at position 443 (Ser-443) is a Phosphoserine. Residues 474–601 (ELGL…VVRR) and 590–717 (IVLD…LSHR) each bind a nucleoside 3',5'-cyclic phosphate. The PNPLA domain occupies 944–1110 (LVLGGGGARG…VNNLPGHLWR (167 aa)). Positions 948-953 (GGGARG) match the GXGXXG motif. The GXSXG signature appears at 975–979 (GVSIG). Ser-977 functions as the Nucleophile in the catalytic mechanism. The active-site Proton acceptor is Asp-1097. The short motif at 1097 to 1099 (DGG) is the DGA/G element. The tract at residues 1308 to 1435 (MDKATQSTPP…NTNNETKNYL (128 aa)) is disordered. Polar residues predominate over residues 1311-1322 (ATQSTPPLQSKA). Basic and acidic residues-rich tracts occupy residues 1330 to 1361 (SKEE…RELS) and 1393 to 1424 (MDKK…KENR). Polar residues predominate over residues 1425 to 1435 (SNTNNETKNYL).

The protein belongs to the NTE family. As to quaternary structure, interacts with Pka-C3; interaction inhibits the catalytic function of Pka-C3 and the esterase activity of sws.

The protein resides in the endoplasmic reticulum membrane. It carries out the reaction a 1-acyl-sn-glycero-3-phosphocholine + H2O = sn-glycerol 3-phosphocholine + a fatty acid + H(+). Functionally, phospholipase B that deacylates intracellular phosphatidylcholine (PtdCho), generating glycerophosphocholine (GroPtdCho). This deacylation occurs at both sn-2 and sn-1 positions of PtdCho. Its specific chemical modification by certain organophosphorus (OP) compounds leads to distal axonopathy. Plays a role in the signaling mechanism between neurons and glia that regulates glia wrapping during development of the adult brain. Essential for membrane lipid homeostasis and cell survival in both neurons and glia of the adult brain. The chain is Neuropathy target esterase sws from Drosophila persimilis (Fruit fly).